Reading from the N-terminus, the 190-residue chain is Peptidyl-tRNA hydrolase (190 aa).

Residue Tyr18 coordinates tRNA. The Proton acceptor role is filled by His23. Residues Phe69, Asn71, and Asn117 each contribute to the tRNA site.

This sequence belongs to the PTH family. In terms of assembly, monomer.

It is found in the cytoplasm. The catalysed reaction is an N-acyl-L-alpha-aminoacyl-tRNA + H2O = an N-acyl-L-amino acid + a tRNA + H(+). Functionally, hydrolyzes ribosome-free peptidyl-tRNAs (with 1 or more amino acids incorporated), which drop off the ribosome during protein synthesis, or as a result of ribosome stalling. Its function is as follows. Catalyzes the release of premature peptidyl moieties from peptidyl-tRNA molecules trapped in stalled 50S ribosomal subunits, and thus maintains levels of free tRNAs and 50S ribosomes. This is Peptidyl-tRNA hydrolase from Rhodococcus opacus (strain B4).